A 412-amino-acid polypeptide reads, in one-letter code: Glucose-1-phosphate adenylyltransferase (412 aa).

Residues Tyr98, Gly163, Glu178–Lys179, and Ser189 each bind alpha-D-glucose 1-phosphate.

The protein belongs to the bacterial/plant glucose-1-phosphate adenylyltransferase family. Homotetramer.

It carries out the reaction alpha-D-glucose 1-phosphate + ATP + H(+) = ADP-alpha-D-glucose + diphosphate. It functions in the pathway glycan biosynthesis; glycogen biosynthesis. In terms of biological role, involved in the biosynthesis of ADP-glucose, a building block required for the elongation reactions to produce glycogen. Catalyzes the reaction between ATP and alpha-D-glucose 1-phosphate (G1P) to produce pyrophosphate and ADP-Glc. The polypeptide is Glucose-1-phosphate adenylyltransferase (Thermosipho melanesiensis (strain DSM 12029 / CIP 104789 / BI429)).